Reading from the N-terminus, the 377-residue chain is Malate dehydrogenase, cytoplasmic (377 aa).

A Pro/N-degron motif is present at residues 2-5; that stretch reads PHSV. The residue at position 6 (Thr-6) is a Phosphothreonine. NAD(+) is bound by residues 20-26 and Asp-57; that span reads GAAGGIG. Substrate is bound by residues Arg-106 and Arg-112. NAD(+) contacts are provided by residues Asn-119 and 144 to 146; that span reads ISN. Residues Asn-146 and Arg-185 each coordinate substrate. His-215 serves as the catalytic Proton acceptor. Residue Met-266 participates in NAD(+) binding.

The protein belongs to the LDH/MDH superfamily. MDH type 1 family. In terms of assembly, homodimer. In terms of processing, targeted for proteasomal degradation when cells are shifted to glucose-containing growth medium.

It localises to the cytoplasm. It catalyses the reaction (S)-malate + NAD(+) = oxaloacetate + NADH + H(+). Functionally, the isoenzyme MDH2 may function primarily in the glyoxylate cycle. The chain is Malate dehydrogenase, cytoplasmic (MDH2) from Saccharomyces cerevisiae (strain ATCC 204508 / S288c) (Baker's yeast).